The sequence spans 600 residues: Estrogen receptor (600 aa).

The modulating (transactivation AF-1); mediates interaction with MACROD1 stretch occupies residues 1–189; sequence MTMTLHTKAS…IMESAKETRY (189 aa). O-linked (GlcNAc) serine glycosylation is present at Ser10. The required for interaction with NCOA1 stretch occupies residues 35-47; that stretch reads MERALGEVYVDNS. Residues 35–179 are interaction with DDX5; self-association; it reads MERALGEVYV…LSSSSEKGNM (145 aa). Residues Ser109 and Ser111 each carry the phosphoserine; by CDK2 modification. At Ser123 the chain carries Phosphoserine. Residues 148 to 177 are disordered; the sequence is DTGPPAFYRSNSDNRRQNGRERLSSSSEKG. The span at 159-170 shows a compositional bias: basic and acidic residues; the sequence is SDNRRQNGRERL. The residue at position 172 (Ser172) is a Phosphoserine; by CK2. 2 consecutive NR C4-type zinc fingers follow at residues 190 to 210 and 226 to 250; these read CAVC…CEGC and CPAT…LRKC. A DNA-binding region (nuclear receptor) is located at residues 190-255; sequence CAVCNDYASG…RLRKCYEVGM (66 aa). A mediates interaction with DNTTIP2 region spans residues 190–315; sequence CAVCNDYASG…TKKNSPALSL (126 aa). The tract at residues 256–315 is hinge; that stretch reads MKGGIRKDRRGGRMLKHKRQRDDLEGRNEMGTSGDMRAANLWPSPLVIKHTKKNSPALSL. Asymmetric dimethylarginine; by PRMT1 is present on Arg265. Residues 267-600 are interaction with AKAP13; sequence GRMLKHKRQR…PEAEGFPNTI (334 aa). Residues 269–600 are self-association; it reads MLKHKRQRDD…PEAEGFPNTI (332 aa). The 237-residue stretch at 316–552 folds into the NR LBD domain; it reads TADQMVSALL…DLLLEMLDAH (237 aa). The interval 316-600 is transactivation AF-2; it reads TADQMVSALL…PEAEGFPNTI (285 aa). 17beta-estradiol is bound by residues Glu358 and Arg399. Cys452 carries the S-palmitoyl cysteine lipid modification. His529 lines the 17beta-estradiol pocket. Position 542 is a phosphotyrosine; by Tyr-kinases (Tyr542). Residues 558–581 are disordered; it reads ASRMGVPPEEPSQSQLTTTSSTSA. A compositionally biased stretch (low complexity) spans 569-581; sequence SQSQLTTTSSTSA. The O-linked (GlcNAc) threonine glycan is linked to Thr576.

The protein belongs to the nuclear hormone receptor family. NR3 subfamily. Interacts with BCAS3. Binds DNA as a homodimer. Can form a heterodimer with ESR2. Interacts with coactivator NCOA5. Interacts with PELP1, the interaction is enhanced by 17-beta-estradiol; the interaction increases ESR1 transcriptional activity. Interacts with NCOA7; the interaction is ligand-inducible. Interacts with AKAP13, CUEDC2, HEXIM1, KDM5A, MAP1S, SMARD1, and UBE1C. Interacts with MUC1; the interaction is stimulated by 7 beta-estradiol (E2) and enhances ESR1-mediated transcription. Interacts with DNTTIP2, and UIMC1. Interacts with KMT2D/MLL2. Interacts with ATAD2; the interaction is enhanced by estradiol. Interacts with KIF18A and LDB1. Interacts with RLIM (via its C-terminus). Interacts with MACROD1. Interacts with SH2D4A and PLCG. Interacts with SH2D4A; the interaction blocks binding to PLCG and inhibits estrogen-induced cell proliferation. Interacts with DYNLL1. Interacts with CCDC62; the interaction requires estradiol and appears to enhance the transcription of target genes. Interacts with NR2C1; the interaction prevents homodimerization of ESR1 and suppresses its transcriptional activity and cell growth. Interacts with DNAAF4. Interacts with PRMT2. Interacts with RBFOX2. Interacts with EP300; the interaction is estrogen-dependent and enhanced by CITED1. Interacts with CITED1; the interaction is estrogen-dependent. Interacts with FAM120B, FOXL2, PHB2 and SLC30A9. Interacts with coactivators NCOA3 and NCOA6. Interacts with STK3/MST2 only in the presence of SAV1 and vice-versa. Binds to CSNK1D. Interacts with NCOA2; NCOA2 can interact with ESR1 AF-1 and AF-2 domains simultaneously and mediate their transcriptional synergy. Interacts with DDX5. Interacts with NCOA1; the interaction seems to require a self-association of N-terminal and C-terminal regions. Interacts with ZNF366, DDX17, NFKB1, RELA, SP1 and SP3. Interacts with NRIP1. Interacts with GPER1; the interaction occurs in an estrogen-dependent manner. Interacts with TRIP4 (ufmylated); estrogen dependent. Interacts with LMTK3; the interaction phosphorylates ESR1 (in vitro) and protects it against proteasomal degradation. Interacts with CCAR2 (via N-terminus) in a ligand-independent manner. Interacts with ZFHX3. Interacts with SFR1 in a ligand-dependent and -independent manner. Interacts with DCAF13, LATS1 and DCAF1; regulates ESR1 ubiquitination and ubiquitin-mediated proteasomal degradation. Interacts (via DNA-binding domain) with POU4F2 (C-terminus); this interaction increases the estrogen receptor ESR1 transcriptional activity in a DNA- and ligand 17-beta-estradiol-independent manner. Interacts with ESRRB isoform 1. Interacts with UBE3A and WBP2. Interacts with GTF2B. Interacts with RBM39. In the absence of hormonal ligand, interacts with TACC1. Interacts with PI3KR1 or PI3KR2 and PTK2/FAK1. Interacts with SRC. Interacts with BAG1; the interaction is promoted in the absence of estradiol (17-beta-estradiol/E2). Interacts with and ubiquitinated by STUB1; the interaction is promoted in the absence of estradiol (17-beta-estradiol/E2). Interacts with NEDD8. Post-translationally, phosphorylated by cyclin A/CDK2 and CK1. Phosphorylation probably enhances transcriptional activity. Dephosphorylation at Ser-123 by PPP5C inhibits its transactivation activity. Phosphorylated by LMTK3 (in vitro). In terms of processing, ubiquitinated; regulated by LATS1 via DCAF1 it leads to ESR1 proteasomal degradation. Deubiquitinated by OTUB1. Ubiquitinated by STUB1/CHIP; in the CA1 hippocampal region following loss of endogenous circulating estradiol (17-beta-estradiol/E2). Ubiquitinated by UBR5, leading to its degradation: UBR5 specifically recognizes and binds ligand-bound ESR1 when it is not associated with coactivators (NCOAs). In presence of NCOAs, the UBR5-degron is not accessible, preventing its ubiquitination and degradation. Palmitoylated at Cys-452 by ZDHHC7 and ZDHHC21. This modification is required for plasma membrane targeting and for rapid intracellular signaling via ERK and AKT kinases and cAMP generation, but not for signaling mediated by the nuclear hormone receptor. Post-translationally, dimethylated by PRMT1 at Arg-265. The methylation may favor cytoplasmic localization. Demethylated by JMJD6 at Arg-265. As to expression, expressed in the CA1 region of the hippocampus, expression decreases with age (at protein level). Expressed in the uterus (at protein level).

It localises to the nucleus. The protein resides in the cytoplasm. Its subcellular location is the golgi apparatus. It is found in the cell membrane. Its function is as follows. Nuclear hormone receptor. The steroid hormones and their receptors are involved in the regulation of eukaryotic gene expression and affect cellular proliferation and differentiation in target tissues. Ligand-dependent nuclear transactivation involves either direct homodimer binding to a palindromic estrogen response element (ERE) sequence or association with other DNA-binding transcription factors, such as AP-1/c-Jun, c-Fos, ATF-2, Sp1 and Sp3, to mediate ERE-independent signaling. Ligand binding induces a conformational change allowing subsequent or combinatorial association with multiprotein coactivator complexes through LXXLL motifs of their respective components. Mutual transrepression occurs between the estrogen receptor (ER) and NF-kappa-B in a cell-type specific manner. Decreases NF-kappa-B DNA-binding activity and inhibits NF-kappa-B-mediated transcription from the IL6 promoter and displace RELA/p65 and associated coregulators from the promoter. Recruited to the NF-kappa-B response element of the CCL2 and IL8 promoters and can displace CREBBP. Present with NF-kappa-B components RELA/p65 and NFKB1/p50 on ERE sequences. Can also act synergistically with NF-kappa-B to activate transcription involving respective recruitment adjacent response elements; the function involves CREBBP. Can activate the transcriptional activity of TFF1. Also mediates membrane-initiated estrogen signaling involving various kinase cascades. Essential for MTA1-mediated transcriptional regulation of BRCA1 and BCAS3. Maintains neuronal survival in response to ischemic reperfusion injury when in the presence of circulating estradiol (17-beta-estradiol/E2). In Rattus norvegicus (Rat), this protein is Estrogen receptor (Esr1).